The following is a 337-amino-acid chain: Calcium-binding protein 39-like (337 aa).

The protein belongs to the Mo25 family. Component of a trimeric complex composed of STK11/LKB1, STRAD (STRADA or STRADB) and CAB39/MO25 (CAB39/MO25alpha or CAB39L/MO25beta): the complex tethers STK11/LKB1 in the cytoplasm and stimulates its catalytic activity.

Functionally, component of a complex that binds and activates STK11/LKB1. In the complex, required to stabilize the interaction between CAB39/MO25 (CAB39/MO25alpha or CAB39L/MO25beta) and STK11/LKB1. This is Calcium-binding protein 39-like (CAB39L) from Homo sapiens (Human).